The following is a 201-amino-acid chain: Dephospho-CoA kinase (201 aa).

The DPCK domain maps to 4–201; that stretch reads SVGLTGNIAS…KYLREAKIKQ (198 aa). 12–17 provides a ligand contact to ATP; sequence ASGKST.

Belongs to the CoaE family.

The protein localises to the cytoplasm. The enzyme catalyses 3'-dephospho-CoA + ATP = ADP + CoA + H(+). It functions in the pathway cofactor biosynthesis; coenzyme A biosynthesis; CoA from (R)-pantothenate: step 5/5. Catalyzes the phosphorylation of the 3'-hydroxyl group of dephosphocoenzyme A to form coenzyme A. The chain is Dephospho-CoA kinase from Legionella pneumophila subsp. pneumophila (strain Philadelphia 1 / ATCC 33152 / DSM 7513).